The chain runs to 490 residues: GTPase Der (490 aa).

2 EngA-type G domains span residues 3–166 and 200–373; these read PVVA…AEAM and IKLA…DSAT. GTP-binding positions include 9–16, 56–60, 118–121, 206–213, 253–257, and 318–321; these read GRPNVGKS, DTGGI, NKVD, GKPNVGKS, DTAGV, and NKWD. In terms of domain architecture, KH-like spans 374-458; the sequence is RRVSTSMLTR…PIQLRFQEGG (85 aa).

It belongs to the TRAFAC class TrmE-Era-EngA-EngB-Septin-like GTPase superfamily. EngA (Der) GTPase family. As to quaternary structure, associates with the 50S ribosomal subunit.

Its function is as follows. GTPase that plays an essential role in the late steps of ribosome biogenesis. In Shewanella halifaxensis (strain HAW-EB4), this protein is GTPase Der.